Here is a 143-residue protein sequence, read N- to C-terminus: Submaxillary gland androgen-regulated protein 2, isoform gamma (143 aa).

The N-terminal stretch at 1-22 (MKALYMVFVLWVLIGCFLSSEC) is a signal peptide. The interval 28–50 (GQHDPTRPLSPSNPSSHFYPQPD) is disordered. Positions 36-45 (LSPSNPSSHF) are enriched in polar residues.

Its subcellular location is the secreted. In terms of biological role, may play a role in protection or detoxification. The sequence is that of Submaxillary gland androgen-regulated protein 2, isoform gamma (Smr2) from Mus musculus (Mouse).